Here is a 247-residue protein sequence, read N- to C-terminus: tRNA (guanine-N(1)-)-methyltransferase (247 aa).

S-adenosyl-L-methionine-binding positions include G113 and 133–138 (IGDFVM).

This sequence belongs to the RNA methyltransferase TrmD family. In terms of assembly, homodimer.

Its subcellular location is the cytoplasm. It carries out the reaction guanosine(37) in tRNA + S-adenosyl-L-methionine = N(1)-methylguanosine(37) in tRNA + S-adenosyl-L-homocysteine + H(+). Its function is as follows. Specifically methylates guanosine-37 in various tRNAs. In Vibrio campbellii (strain ATCC BAA-1116), this protein is tRNA (guanine-N(1)-)-methyltransferase.